Reading from the N-terminus, the 126-residue chain is Glycine cleavage system H protein (126 aa).

The Lipoyl-binding domain occupies 24–105 (TLTVGITDHA…AYGVWLFKIK (82 aa)). Lys65 is subject to N6-lipoyllysine.

It belongs to the GcvH family. As to quaternary structure, the glycine cleavage system is composed of four proteins: P, T, L and H. (R)-lipoate serves as cofactor.

In terms of biological role, the glycine cleavage system catalyzes the degradation of glycine. The H protein shuttles the methylamine group of glycine from the P protein to the T protein. The protein is Glycine cleavage system H protein of Burkholderia cenocepacia (strain HI2424).